The chain runs to 110 residues: PCNA-associated factor (110 aa).

Lysine 15 participates in a covalent cross-link: Glycyl lysine isopeptide (Lys-Gly) (interchain with G-Cter in ubiquitin). The D-box signature appears at 23–34 (RKVLGSSTFVTN). Lysine 24 bears the N6-acetyllysine; alternate mark. A Glycyl lysine isopeptide (Lys-Gly) (interchain with G-Cter in ubiquitin); alternate cross-link involves residue lysine 24. Serine 28 and serine 71 each carry phosphoserine. Residues 28–39 (SSTFVTNSSSSS) show a composition bias toward low complexity. Positions 28-110 (SSTFVTNSSS…QPDHRDDENE (83 aa)) are disordered. The short motif at 61–71 (QKGIGEFFRLS) is the PIP-box element. A compositionally biased stretch (basic and acidic residues) spans 71 to 80 (SPKESKKENQ). The KEN box signature appears at 77–79 (KEN). Residues 84–96 (EAGTSGLGKAKRK) carry the Initiation motif motif.

Interacts (when monoubiquitinated at Lys-15 and Lys-24) with PCNA. Interacts with isoform 2/p33ING1b of ING1. Interacts with BRCA1. Monoubiquitinated at Lys-15 and Lys-24 during normal S phase, promoting its association with PCNA. Also diubiquitinated at these 2 sites. Following DNA damage, monoubiquitin chains at Lys-15 and Lys-24 are probably extended, leading to disrupt the interaction with PCNA. Polyubiquitinated by the APC/C complex at the mitotic exit, leading to its degradation by the proteasome.

The protein localises to the nucleus. It is found in the cytoplasm. It localises to the perinuclear region. Its function is as follows. PCNA-binding protein that acts as a regulator of DNA repair during DNA replication. Following DNA damage, the interaction with PCNA is disrupted, facilitating the interaction between monoubiquitinated PCNA and the translesion DNA synthesis DNA polymerase eta (POLH) at stalled replisomes, facilitating the bypass of replication-fork-blocking lesions. Also acts as a regulator of centrosome number. The sequence is that of PCNA-associated factor from Mus musculus (Mouse).